The chain runs to 324 residues: D-alanine--D-alanine ligase (324 aa).

Residues 116-311 (KQVWHTLGIP…FQQLVLAILA (196 aa)) form the ATP-grasp domain. ATP is bound at residue 142–197 (ATELGFPLIVKPAHEGSSIGMAKVSSASELIDAWKAASTYDSQVLVEQWIHGPEFT). Asp265, Glu278, and Asn280 together coordinate Mg(2+).

This sequence belongs to the D-alanine--D-alanine ligase family. Mg(2+) is required as a cofactor. Requires Mn(2+) as cofactor.

The protein resides in the cytoplasm. The catalysed reaction is 2 D-alanine + ATP = D-alanyl-D-alanine + ADP + phosphate + H(+). It functions in the pathway cell wall biogenesis; peptidoglycan biosynthesis. Cell wall formation. The protein is D-alanine--D-alanine ligase of Pseudomonas fluorescens (strain Pf0-1).